Reading from the N-terminus, the 529-residue chain is GMP synthase [glutamine-hydrolyzing] (529 aa).

Residues proline 13–threonine 204 enclose the Glutamine amidotransferase type-1 domain. Cysteine 90 serves as the catalytic Nucleophile. Active-site residues include histidine 178 and glutamate 180. Residues tryptophan 205 to arginine 403 enclose the GMPS ATP-PPase domain. Residue serine 233–alanine 239 participates in ATP binding.

Homodimer.

The catalysed reaction is XMP + L-glutamine + ATP + H2O = GMP + L-glutamate + AMP + diphosphate + 2 H(+). The protein operates within purine metabolism; GMP biosynthesis; GMP from XMP (L-Gln route): step 1/1. In terms of biological role, catalyzes the synthesis of GMP from XMP. The chain is GMP synthase [glutamine-hydrolyzing] from Corynebacterium jeikeium (strain K411).